Here is a 203-residue protein sequence, read N- to C-terminus: Ribosome maturation factor RimP (203 aa).

The segment at Val179–Lys203 is disordered.

The protein belongs to the RimP family.

The protein localises to the cytoplasm. Functionally, required for maturation of 30S ribosomal subunits. The polypeptide is Ribosome maturation factor RimP (Gluconobacter oxydans (strain 621H) (Gluconobacter suboxydans)).